Here is a 443-residue protein sequence, read N- to C-terminus: MRLSRYFLPVMKETPADAQIISHKLMLRAGMIRQTAAGIYAWLPLGLRVLRRIEKIIREEQARAGALELLMPTLQTADLWRESGRYDAYGPEMLRIKDRHNRELLYGPTNEEMITALIRDNLQSYRDLPRIFYHIQWKFRDEVRPRFGVMRGREFLMKDAYSFDIDETAGRHNYNRMFVAYLNSFSRLGLRAIPMQADTGPIGGDLSHEFIVLAPNGESDVFYHSNWEQPTRHIEADFDDPKALQSIVNDHISDYAATDEKRDPLREAQAGDKLRQSRGIEVGHIFFFGTKYSKPMGFTLPGPDGKPIPIQMGSYGIGISRLLGAIIEASHDDNGIIWPEAVAPYHVGLINLRIDDENCRAIADSLYQRLEAAGIDTLYDDRNERGGAKFATMDLIGLPWQVVIGPKGAEKGVVELKNRANGEKQTISVENAFNLLTAGHQQR.

The protein belongs to the class-II aminoacyl-tRNA synthetase family. ProS type 2 subfamily. In terms of assembly, homodimer.

It is found in the cytoplasm. It catalyses the reaction tRNA(Pro) + L-proline + ATP = L-prolyl-tRNA(Pro) + AMP + diphosphate. Its function is as follows. Catalyzes the attachment of proline to tRNA(Pro) in a two-step reaction: proline is first activated by ATP to form Pro-AMP and then transferred to the acceptor end of tRNA(Pro). The sequence is that of Proline--tRNA ligase from Zymomonas mobilis subsp. mobilis (strain ATCC 31821 / ZM4 / CP4).